A 479-amino-acid polypeptide reads, in one-letter code: Kynurenine 3-monooxygenase (479 aa).

It belongs to the aromatic-ring hydroxylase family. KMO subfamily. Requires FAD as cofactor.

Its subcellular location is the mitochondrion outer membrane. The enzyme catalyses L-kynurenine + NADPH + O2 + H(+) = 3-hydroxy-L-kynurenine + NADP(+) + H2O. It participates in cofactor biosynthesis; NAD(+) biosynthesis; quinolinate from L-kynurenine: step 1/3. In terms of biological role, catalyzes the hydroxylation of L-kynurenine (L-Kyn) to form 3-hydroxy-L-kynurenine (L-3OHKyn). Required for synthesis of quinolinic acid. The polypeptide is Kynurenine 3-monooxygenase (Chaetomium globosum (strain ATCC 6205 / CBS 148.51 / DSM 1962 / NBRC 6347 / NRRL 1970) (Soil fungus)).